Consider the following 450-residue polypeptide: Phosphoglucosamine mutase (450 aa).

Serine 102 acts as the Phosphoserine intermediate in catalysis. Mg(2+) is bound by residues serine 102, aspartate 243, aspartate 245, and aspartate 247. Serine 102 bears the Phosphoserine mark.

This sequence belongs to the phosphohexose mutase family. The cofactor is Mg(2+). Post-translationally, activated by phosphorylation.

It catalyses the reaction alpha-D-glucosamine 1-phosphate = D-glucosamine 6-phosphate. Catalyzes the conversion of glucosamine-6-phosphate to glucosamine-1-phosphate. This is Phosphoglucosamine mutase from Rhizobium etli (strain ATCC 51251 / DSM 11541 / JCM 21823 / NBRC 15573 / CFN 42).